We begin with the raw amino-acid sequence, 133 residues long: Histone H2A.Z (133 aa).

The segment covering M1–K11 has biased composition (basic residues). A disordered region spans residues M1 to L30. S2 is modified (N-acetylserine). Residues K4, K11, and K13 each carry the N6-acetyllysine modification.

Belongs to the histone H2A family. In terms of assembly, the nucleosome is a histone octamer containing two molecules each of H2A, H2B, H3 and H4 assembled in one H3-H4 heterotetramer and two H2A-H2B heterodimers. The octamer wraps approximately 147 bp of DNA. H2A or its variant H2A.Z forms a heterodimer with H2B. H2A.Z associates with the VPS72/SWC2 subunit of the SWR1 chromatin remodeling complex. Also interacts with RBP1/DNA-directed RNA polymerase II largest subunit. Acetylated once deposited into chromatin.

It localises to the nucleus. The protein localises to the chromosome. Its function is as follows. Variant histone H2A which can replace H2A in some nucleosomes. Nucleosomes wrap and compact DNA into chromatin, limiting DNA accessibility to the cellular machineries which require DNA as a template. Histones thereby play a central role in transcription regulation, DNA repair, DNA replication and chromosomal stability. DNA accessibility is regulated via a complex set of post-translational modifications of histones, also called histone code, and nucleosome remodeling. This variant is enriched at promoters, it may keep them in a repressed state until the appropriate activation signal is received. Near telomeres, it may counteract gene silencing caused by the spread of heterochromatin proteins. Required for the RNA polymerase II and SPT15/TBP recruitment to the target genes. Involved in chromosome stability. This is Histone H2A.Z (HTZ1) from Lodderomyces elongisporus (strain ATCC 11503 / CBS 2605 / JCM 1781 / NBRC 1676 / NRRL YB-4239) (Yeast).